The chain runs to 144 residues: MNFKYIVAVSFLLASAYARSEENDEQSLSQRDVLEEESLREIRGIGTKILGGVKTALKGALKELASTYANGKRTAEEHEVMKRLEAVMRDLDSLDYPEEAAERETRSFNQEEIANLFTKKEKRILGPVISTIGGVLGGLLKNLG.

An N-terminal signal peptide occupies residues 1-18; it reads MNFKYIVAVSFLLASAYA. The propeptide occupies 19 to 43; that stretch reads RSEENDEQSLSQRDVLEEESLREIR. Asparagine 70 carries the post-translational modification Asparagine amide. Residues 74-123 constitute a propeptide that is removed on maturation; it reads TAEEHEVMKRLEAVMRDLDSLDYPEEAAERETRSFNQEEIANLFTKKEKR. Leucine 143 is modified (leucine amide).

Belongs to the bombinin family. As to expression, expressed by the skin glands.

The protein localises to the secreted. Functionally, antibacterial peptide with amphipathic alpha-helical structure that has activity against both Gram-positive and Gram-negative bacteria. Also shows antimicrobial activity against the fungus C.albicans, but not against A.flavus nor P.uticale. It has little hemolytic activity. It possess a significant cytotoxicity against tumor cell lines, but does not possess a significant anti-HIV activity. Also shows high spermicidal activity. Antibacterial peptide with activity against both Gram-positive and Gram-negative bacteria. Also shows antimicrobial activity against the fungus C.albicans. In addition, shows strong hemolytic activity. The sequence is that of Maximins 1/H1 from Bombina maxima (Giant fire-bellied toad).